Consider the following 1390-residue polypeptide: DNA-directed RNA polymerase subunit beta'' (1390 aa).

Zn(2+) is bound by residues C224, C295, C302, and C305.

Belongs to the RNA polymerase beta' chain family. RpoC2 subfamily. In plastids the minimal PEP RNA polymerase catalytic core is composed of four subunits: alpha, beta, beta', and beta''. When a (nuclear-encoded) sigma factor is associated with the core the holoenzyme is formed, which can initiate transcription. It depends on Zn(2+) as a cofactor.

Its subcellular location is the plastid. It localises to the chloroplast. It carries out the reaction RNA(n) + a ribonucleoside 5'-triphosphate = RNA(n+1) + diphosphate. Its function is as follows. DNA-dependent RNA polymerase catalyzes the transcription of DNA into RNA using the four ribonucleoside triphosphates as substrates. This Daucus carota (Wild carrot) protein is DNA-directed RNA polymerase subunit beta''.